A 301-amino-acid polypeptide reads, in one-letter code: Sulfate adenylyltransferase subunit 2 (301 aa).

A disordered region spans residues 278–301 (ERQGRLIDGDEPASMERKKREGYF).

This sequence belongs to the PAPS reductase family. CysD subfamily. In terms of assembly, sulfate-activating enzymes, NodP and NodQ, may be physically associated.

It catalyses the reaction sulfate + ATP + H(+) = adenosine 5'-phosphosulfate + diphosphate. Functionally, proposed to provide activated sulfate for transfer to nod factor. This Azospirillum brasilense protein is Sulfate adenylyltransferase subunit 2 (nodP).